A 192-amino-acid chain; its full sequence is Fumarylpyruvate hydrolase (192 aa).

3 residues coordinate a divalent metal cation: glutamate 41, glutamate 43, and aspartate 72.

Belongs to the FAH family. Mg(2+) serves as cofactor. The cofactor is Mn(2+).

The enzyme catalyses 3-fumarylpyruvate + H2O = fumarate + pyruvate + H(+). The protein operates within aromatic compound metabolism; naphthalene degradation. Functionally, involved in the catabolism of gentisate (2,5-dihydroxybenzoate) a key intermediates in the aerobic pathways for the metabolism of a large number of aromatic compoun such as naphthalene. Catalyzes the hydrolytic cleavage of fumarylpyruvate to form fumarate and pyruvate. This is Fumarylpyruvate hydrolase from Ralstonia sp.